A 150-amino-acid polypeptide reads, in one-letter code: Large ribosomal subunit protein bL9 (150 aa).

Belongs to the bacterial ribosomal protein bL9 family.

Its function is as follows. Binds to the 23S rRNA. This Photobacterium profundum (strain SS9) protein is Large ribosomal subunit protein bL9.